The following is a 273-amino-acid chain: NADPH-dependent 7-cyano-7-deazaguanine reductase (273 aa).

80–82 (VES) is a substrate binding site. Residue 82 to 83 (SK) participates in NADPH binding. C180 (thioimide intermediate) is an active-site residue. D187 acts as the Proton donor in catalysis. 219-220 (HE) provides a ligand contact to substrate. NADPH is bound at residue 248-249 (RG).

Belongs to the GTP cyclohydrolase I family. QueF type 2 subfamily. In terms of assembly, homodimer.

It localises to the cytoplasm. The catalysed reaction is 7-aminomethyl-7-carbaguanine + 2 NADP(+) = 7-cyano-7-deazaguanine + 2 NADPH + 3 H(+). The protein operates within tRNA modification; tRNA-queuosine biosynthesis. Functionally, catalyzes the NADPH-dependent reduction of 7-cyano-7-deazaguanine (preQ0) to 7-aminomethyl-7-deazaguanine (preQ1). The polypeptide is NADPH-dependent 7-cyano-7-deazaguanine reductase (Bordetella bronchiseptica (strain ATCC BAA-588 / NCTC 13252 / RB50) (Alcaligenes bronchisepticus)).